The sequence spans 438 residues: uncharacterized protein (438 aa).

Histidine 59 is a Zn(2+) binding site. The active-site Proton acceptor is glutamate 62. Residues histidine 63 and glutamate 139 each contribute to the Zn(2+) site.

It belongs to the peptidase M16 family. It depends on Zn(2+) as a cofactor.

This is an uncharacterized protein from Mycobacterium bovis (strain ATCC BAA-935 / AF2122/97).